Here is a 524-residue protein sequence, read N- to C-terminus: Apoptosis inhibitor 5-A (524 aa).

The tract at residues 1 to 360 (MATVEELYRS…HQLGRKLPDF (360 aa)) is ARM-like and Heat-like helical repeats. Residues 440–524 (TLSWKPVQRT…RGNRSRGRIY (85 aa)) are disordered. A Nuclear localization signal motif is present at residues 455–476 (KRTSDETSSTSPPKKPIVGPKR). A compositionally biased stretch (gly residues) spans 503-516 (GFQGGRGRGWGGRG).

Belongs to the API5 family. As to quaternary structure, monomer.

It localises to the nucleus. Functionally, may be an antiapoptotic factor. The protein is Apoptosis inhibitor 5-A (api5-a) of Xenopus laevis (African clawed frog).